The sequence spans 108 residues: Nucleoid-associated protein Bphyt_1827 (108 aa).

The tract at residues 87–108 is disordered; that stretch reads AQEKMGGMTSGLPLPPGFKLPF. Over residues 99–108 the composition is skewed to pro residues; that stretch reads PLPPGFKLPF.

The protein belongs to the YbaB/EbfC family. Homodimer.

Its subcellular location is the cytoplasm. It is found in the nucleoid. Its function is as follows. Binds to DNA and alters its conformation. May be involved in regulation of gene expression, nucleoid organization and DNA protection. The protein is Nucleoid-associated protein Bphyt_1827 of Paraburkholderia phytofirmans (strain DSM 17436 / LMG 22146 / PsJN) (Burkholderia phytofirmans).